Consider the following 464-residue polypeptide: Leucine-rich repeat-containing protein 34 (464 aa).

Residues 1-48 (MAAQPPRPVGERSMGSSREAARAPARSPAWASTQASTPGAALAVQRES) form a disordered region. A compositionally biased stretch (low complexity) spans 16-32 (SSREAARAPARSPAWAS). 2 LRR repeats span residues 295–315 (SLRY…VYLA) and 323–345 (TLEV…LSET).

In terms of assembly, interacts with NPM1 and NCL.

It localises to the nucleus. The protein localises to the nucleolus. Its subcellular location is the cytoplasm. Highly expressed in stem cells where it may be involved in regulation of pluripotency. In embryonic stem cells (ESCs), important for normal expression of the pluripotency regulators POU5F1/OCT4 and KLF4. Also important for expression of the ectodermal marker gene NES and the endodermal marker gene GATA4. Promotes stem cell proliferation in vitro. This is Leucine-rich repeat-containing protein 34 (LRRC34) from Homo sapiens (Human).